The following is a 316-amino-acid chain: tRNA dimethylallyltransferase (316 aa).

17-24 (GPTASGKT) is a binding site for ATP. 19–24 (TASGKT) lines the substrate pocket. 3 interaction with substrate tRNA regions span residues 42–45 (DSAL), 166–170 (QRLSR), and 247–252 (RCVGYR).

It belongs to the IPP transferase family. As to quaternary structure, monomer. Requires Mg(2+) as cofactor.

It catalyses the reaction adenosine(37) in tRNA + dimethylallyl diphosphate = N(6)-dimethylallyladenosine(37) in tRNA + diphosphate. Its function is as follows. Catalyzes the transfer of a dimethylallyl group onto the adenine at position 37 in tRNAs that read codons beginning with uridine, leading to the formation of N6-(dimethylallyl)adenosine (i(6)A). In Salmonella typhi, this protein is tRNA dimethylallyltransferase.